The chain runs to 466 residues: Acetylornithine aminotransferase, mitochondrial (466 aa).

K308 is subject to N6-(pyridoxal phosphate)lysine.

Belongs to the class-III pyridoxal-phosphate-dependent aminotransferase family. Pyridoxal 5'-phosphate is required as a cofactor.

It is found in the mitochondrion matrix. It carries out the reaction N(2)-acetyl-L-ornithine + 2-oxoglutarate = N-acetyl-L-glutamate 5-semialdehyde + L-glutamate. It participates in amino-acid biosynthesis; L-arginine biosynthesis; N(2)-acetyl-L-ornithine from L-glutamate: step 4/4. In Debaryomyces hansenii (strain ATCC 36239 / CBS 767 / BCRC 21394 / JCM 1990 / NBRC 0083 / IGC 2968) (Yeast), this protein is Acetylornithine aminotransferase, mitochondrial (ARG8).